Consider the following 294-residue polypeptide: Ribosomal RNA small subunit methyltransferase H (294 aa).

Residues 36-38 (GGH), Asp55, Phe82, Asp97, and Gln104 contribute to the S-adenosyl-L-methionine site. Residues 265–285 (KPTVATDDEQNRNPRSRSAKW) are disordered.

This sequence belongs to the methyltransferase superfamily. RsmH family.

The protein resides in the cytoplasm. The catalysed reaction is cytidine(1402) in 16S rRNA + S-adenosyl-L-methionine = N(4)-methylcytidine(1402) in 16S rRNA + S-adenosyl-L-homocysteine + H(+). Functionally, specifically methylates the N4 position of cytidine in position 1402 (C1402) of 16S rRNA. This is Ribosomal RNA small subunit methyltransferase H from Synechococcus sp. (strain CC9902).